The chain runs to 158 residues: NAD(P)H-quinone oxidoreductase subunit J, chloroplastic (158 aa).

The protein belongs to the complex I 30 kDa subunit family. As to quaternary structure, NDH is composed of at least 16 different subunits, 5 of which are encoded in the nucleus.

It localises to the plastid. The protein localises to the chloroplast thylakoid membrane. The enzyme catalyses a plastoquinone + NADH + (n+1) H(+)(in) = a plastoquinol + NAD(+) + n H(+)(out). The catalysed reaction is a plastoquinone + NADPH + (n+1) H(+)(in) = a plastoquinol + NADP(+) + n H(+)(out). NDH shuttles electrons from NAD(P)H:plastoquinone, via FMN and iron-sulfur (Fe-S) centers, to quinones in the photosynthetic chain and possibly in a chloroplast respiratory chain. The immediate electron acceptor for the enzyme in this species is believed to be plastoquinone. Couples the redox reaction to proton translocation, and thus conserves the redox energy in a proton gradient. The chain is NAD(P)H-quinone oxidoreductase subunit J, chloroplastic from Draba nemorosa (Woodland whitlowgrass).